Reading from the N-terminus, the 555-residue chain is Formate--tetrahydrofolate ligase (555 aa).

Residue 64–71 participates in ATP binding; the sequence is TKAGIGKT.

Belongs to the formate--tetrahydrofolate ligase family.

The catalysed reaction is (6S)-5,6,7,8-tetrahydrofolate + formate + ATP = (6R)-10-formyltetrahydrofolate + ADP + phosphate. It participates in one-carbon metabolism; tetrahydrofolate interconversion. This is Formate--tetrahydrofolate ligase from Bacteroides thetaiotaomicron (strain ATCC 29148 / DSM 2079 / JCM 5827 / CCUG 10774 / NCTC 10582 / VPI-5482 / E50).